A 69-amino-acid polypeptide reads, in one-letter code: Small ribosomal subunit protein bS21 (69 aa).

Belongs to the bacterial ribosomal protein bS21 family.

The polypeptide is Small ribosomal subunit protein bS21 (rpsU) (Treponema pallidum (strain Nichols)).